We begin with the raw amino-acid sequence, 238 residues long: Chorionic somatomammotropin hormone 2 (238 aa).

The first 36 residues, Met1–Gly36, serve as a signal peptide directing secretion. Residue His66 participates in Zn(2+) binding. 4 N-linked (GlcNAc...) asparagine glycosylation sites follow: Asn70, Asn92, Asn146, and Asn160. A disulfide bridge links Cys97 with Cys215. Asp224 serves as a coordination point for Zn(2+). A disulfide bridge connects residues Cys232 and Cys238.

The protein belongs to the somatotropin/prolactin family.

It localises to the secreted. The sequence is that of Chorionic somatomammotropin hormone 2 (CSH2) from Bos taurus (Bovine).